Reading from the N-terminus, the 417-residue chain is Serine hydroxymethyltransferase (417 aa).

(6S)-5,6,7,8-tetrahydrofolate is bound by residues Leu-112 and 116 to 118 (GHL). Lys-221 is subject to N6-(pyridoxal phosphate)lysine. Residue Glu-247 coordinates (6S)-5,6,7,8-tetrahydrofolate.

This sequence belongs to the SHMT family. As to quaternary structure, homodimer. It depends on pyridoxal 5'-phosphate as a cofactor.

It is found in the cytoplasm. The catalysed reaction is (6R)-5,10-methylene-5,6,7,8-tetrahydrofolate + glycine + H2O = (6S)-5,6,7,8-tetrahydrofolate + L-serine. It functions in the pathway one-carbon metabolism; tetrahydrofolate interconversion. Its pathway is amino-acid biosynthesis; glycine biosynthesis; glycine from L-serine: step 1/1. In terms of biological role, catalyzes the reversible interconversion of serine and glycine with tetrahydrofolate (THF) serving as the one-carbon carrier. This reaction serves as the major source of one-carbon groups required for the biosynthesis of purines, thymidylate, methionine, and other important biomolecules. Also exhibits THF-independent aldolase activity toward beta-hydroxyamino acids, producing glycine and aldehydes, via a retro-aldol mechanism. The polypeptide is Serine hydroxymethyltransferase (Borreliella burgdorferi (strain ATCC 35210 / DSM 4680 / CIP 102532 / B31) (Borrelia burgdorferi)).